Reading from the N-terminus, the 217-residue chain is Probable glutathione S-transferase (217 aa).

A GST N-terminal domain is found at Ala2 to Ser81. Residues Ser12, Lys39, Ile53, and Glu65–Ser66 each bind glutathione. The GST C-terminal domain occupies Asp86–Ile210.

This sequence belongs to the GST superfamily. HSP26 family.

It carries out the reaction RX + glutathione = an S-substituted glutathione + a halide anion + H(+). The polypeptide is Probable glutathione S-transferase (PRP1) (Solanum tuberosum (Potato)).